Consider the following 288-residue polypeptide: 33 kDa chaperonin (288 aa).

2 disulfide bridges follow: C236–C238 and C269–C272.

This sequence belongs to the HSP33 family. In terms of processing, under oxidizing conditions two disulfide bonds are formed involving the reactive cysteines. Under reducing conditions zinc is bound to the reactive cysteines and the protein is inactive.

The protein localises to the cytoplasm. Its function is as follows. Redox regulated molecular chaperone. Protects both thermally unfolding and oxidatively damaged proteins from irreversible aggregation. Plays an important role in the bacterial defense system toward oxidative stress. The sequence is that of 33 kDa chaperonin from Lactococcus lactis subsp. lactis (strain IL1403) (Streptococcus lactis).